The chain runs to 161 residues: ATP synthase subunit b 1 (161 aa).

The helical transmembrane segment at 6 to 26 (ETWVAIAFVILMVVFGYLGVF) threads the bilayer.

It belongs to the ATPase B chain family. F-type ATPases have 2 components, F(1) - the catalytic core - and F(0) - the membrane proton channel. F(1) has five subunits: alpha(3), beta(3), gamma(1), delta(1), epsilon(1). F(0) has three main subunits: a(1), b(2) and c(10-14). The alpha and beta chains form an alternating ring which encloses part of the gamma chain. F(1) is attached to F(0) by a central stalk formed by the gamma and epsilon chains, while a peripheral stalk is formed by the delta and b chains.

Its subcellular location is the cell inner membrane. In terms of biological role, f(1)F(0) ATP synthase produces ATP from ADP in the presence of a proton or sodium gradient. F-type ATPases consist of two structural domains, F(1) containing the extramembraneous catalytic core and F(0) containing the membrane proton channel, linked together by a central stalk and a peripheral stalk. During catalysis, ATP synthesis in the catalytic domain of F(1) is coupled via a rotary mechanism of the central stalk subunits to proton translocation. Component of the F(0) channel, it forms part of the peripheral stalk, linking F(1) to F(0). The chain is ATP synthase subunit b 1 from Bradyrhizobium diazoefficiens (strain JCM 10833 / BCRC 13528 / IAM 13628 / NBRC 14792 / USDA 110).